Reading from the N-terminus, the 262-residue chain is Glutamate racemase (262 aa).

Substrate is bound by residues 9 to 10 and 41 to 42; these read DS and YG. The Proton donor/acceptor role is filled by Cys73. A substrate-binding site is contributed by 74–75; that stretch reads NT. The active-site Proton donor/acceptor is the Cys180. Position 181–182 (181–182) interacts with substrate; the sequence is TH.

This sequence belongs to the aspartate/glutamate racemases family.

It carries out the reaction L-glutamate = D-glutamate. The protein operates within cell wall biogenesis; peptidoglycan biosynthesis. Functionally, provides the (R)-glutamate required for cell wall biosynthesis. The sequence is that of Glutamate racemase from Aliivibrio fischeri (strain ATCC 700601 / ES114) (Vibrio fischeri).